A 468-amino-acid polypeptide reads, in one-letter code: Cysteine--tRNA ligase (468 aa).

Zn(2+) is bound at residue C29. A 'HIGH' region motif is present at residues 31 to 41; the sequence is PTVYNYIHIGN. Positions 209, 234, and 238 each coordinate Zn(2+). The 'KMSKS' region signature appears at 266-270; sequence KMSKS. An ATP-binding site is contributed by K269.

It belongs to the class-I aminoacyl-tRNA synthetase family. In terms of assembly, monomer. The cofactor is Zn(2+).

It localises to the cytoplasm. It catalyses the reaction tRNA(Cys) + L-cysteine + ATP = L-cysteinyl-tRNA(Cys) + AMP + diphosphate. This Brevibacillus brevis (strain 47 / JCM 6285 / NBRC 100599) protein is Cysteine--tRNA ligase.